The following is a 198-amino-acid chain: Small ribosomal subunit protein uS4c (198 aa).

Residues 85 to 145 (LRLDATIFRL…PKKFTIILIC (61 aa)) form the S4 RNA-binding domain.

It belongs to the universal ribosomal protein uS4 family. As to quaternary structure, part of the 30S ribosomal subunit.

The protein resides in the plastid. Its subcellular location is the apicoplast. Its function is as follows. One of the primary rRNA binding proteins, it binds directly to 16S rRNA where it nucleates assembly of the body of the 30S subunit. In Toxoplasma gondii, this protein is Small ribosomal subunit protein uS4c (rps4).